The primary structure comprises 221 residues: Ribonuclease P protein subunit p29 (221 aa).

Ser10 is modified (phosphoserine).

The protein belongs to the eukaryotic/archaeal RNase P protein component 1 family. Component of nuclear RNase P and RNase MRP ribonucleoproteins. RNase P consists of a catalytic RNA moiety and 10 different protein chains; POP1, POP4, POP5, POP7, RPP14, RPP21, RPP25, RPP30, RPP38 and RPP40. Within the RNase P complex, POP1, POP7 and RPP25 form the 'finger' subcomplex, POP5, RPP14, RPP40 and homodimeric RPP30 form the 'palm' subcomplex, and RPP21, POP4 and RPP38 form the 'wrist' subcomplex. All subunits of the RNase P complex interact with the catalytic RNA. Several subunits of RNase P are also part of the RNase MRP complex. RNase MRP consists of a catalytic RNA moiety and about 8 protein subunits; POP1, POP7, RPP25, RPP30, RPP38, RPP40 and possibly also POP4 and POP5.

It localises to the nucleus. The protein resides in the nucleolus. In terms of biological role, component of ribonuclease P, a ribonucleoprotein complex that generates mature tRNA molecules by cleaving their 5'-ends. The protein is Ribonuclease P protein subunit p29 (Pop4) of Rattus norvegicus (Rat).